Consider the following 438-residue polypeptide: Coenzyme A disulfide reductase (438 aa).

FAD is bound at residue 8–33; sequence GAVAGGATCASQIRRLDKESDIIIFE. Threonine 15, glutamine 19, arginine 22, serine 39, and asparagine 42 together coordinate substrate. Catalysis depends on cysteine 43, which acts as the Nucleophile. Residue cysteine 43 is the Redox-active of the active site. Lysine 71 lines the substrate pocket. 151-166 lines the NADP(+) pocket; it reads VLVIGAGYVSLEVLEN. An FAD-binding site is contributed by 267 to 277; sequence TNVPNIYAIGD. Position 299 (histidine 299) interacts with substrate. FAD is bound at residue tyrosine 419. A substrate-binding site is contributed by lysine 427.

Belongs to the class-III pyridine nucleotide-disulfide oxidoreductase family. As to quaternary structure, homodimer. The cofactor is FAD.

It carries out the reaction NADP(+) + 2 CoA = CoA-disulfide + NADPH + H(+). Functionally, catalyzes specifically the NADPH-dependent reduction of coenzyme A disulfide. The chain is Coenzyme A disulfide reductase from Staphylococcus aureus (strain JH1).